The following is a 970-amino-acid chain: Vacuolar membrane protease (970 aa).

A compositionally biased stretch (polar residues) spans 1 to 12 (MTTADSNSSATR). Residues 1-35 (MTTADSNSSATRGSHEMADGSNRVPNDEPYHRKSP) form a disordered region. The Cytoplasmic segment spans residues 1 to 56 (MTTADSNSSATRGSHEMADGSNRVPNDEPYHRKSPESCENANFFVRAMRASFGYRK). The segment covering 25–35 (PNDEPYHRKSP) has biased composition (basic and acidic residues). Residues 57–77 (TSLTILVFLSVIATVLLSYYD) traverse the membrane as a helical segment. Topologically, residues 78–397 (SSLEFSVSLP…FVVPMTFVFG (320 aa)) are vacuolar. N146 and N173 each carry an N-linked (GlcNAc...) asparagine glycan. Zn(2+) is bound by residues H187 and D199. The active-site Proton acceptor is the E234. Zn(2+)-binding residues include E235, E260, and H333. Residues 398–418 (VNVLLMVLVPLVSLISLALIF) form a helical membrane-spanning segment. The Cytoplasmic segment spans residues 419 to 423 (AHRKW). Residues 424-444 (SVSLVTFFKFPLSFILSIFLL) traverse the membrane as a helical segment. Residues 445-465 (DNFSSWFVVSVNNFLPNSSAG) are Vacuolar-facing. Residues N446 and N461 are each glycosylated (N-linked (GlcNAc...) asparagine). A helical membrane pass occupies residues 466-486 (IIALTYFSFFVLANYLLLNGI). Residues 487–502 (NLLFWKFKGTRHDEKL) lie on the Cytoplasmic side of the membrane. Residues 503–523 (VVILQISFMFWVSLIWSTANI) form a helical membrane-spanning segment. Residues 524 to 535 (AKSQFNGEHSGE) lie on the Vacuolar side of the membrane. The chain crosses the membrane as a helical span at residues 536 to 556 (FLLTLLYILQAAGGVFGLLCW). The Cytoplasmic segment spans residues 557 to 620 (LFKRSRTVHT…PTKHYSYDWS (64 aa)). Residues 621-641 (IQFLFIVPISSFLSYNYGWLI) traverse the membrane as a helical segment. Topologically, residues 642–658 (LEGLKKTLQESATSEYL) are vacuolar. The chain crosses the membrane as a helical span at residues 659–679 (VFRALKLLAVVVAVPYLPFIF). Topologically, residues 680–683 (KVNR) are cytoplasmic. The helical transmembrane segment at 684–704 (IVFLVTIFLFVYGLGAIVISE) threads the bilayer. Residues 705–970 (PFTEANPLKL…LVNVKKSVLV (266 aa)) are Vacuolar-facing. 3 N-linked (GlcNAc...) asparagine glycosylation sites follow: N738, N797, and N877.

The protein belongs to the peptidase M28 family. Zn(2+) is required as a cofactor.

The protein localises to the vacuole membrane. In terms of biological role, may be involved in vacuolar sorting and osmoregulation. This chain is Vacuolar membrane protease, found in Meyerozyma guilliermondii (strain ATCC 6260 / CBS 566 / DSM 6381 / JCM 1539 / NBRC 10279 / NRRL Y-324) (Yeast).